The chain runs to 1307 residues: Cyclic nucleotide-gated channel beta-1 (1307 aa).

Disordered regions lie at residues 1–101 (MLGW…AQVA), 126–178 (QPVY…TEPS), 193–262 (LPQP…PGDP), 320–458 (DSCW…LDSC), 470–625 (LERA…SQNS), and 648–681 (EKLI…KPAE). The Cytoplasmic segment spans residues 1-720 (MLGWVQRVLP…SIDPLTNLMY (720 aa)). Residues 43 to 59 (VQPEPEPEPEPAPEEAA) show a composition bias toward acidic residues. The segment covering 165 to 174 (GSDKTSKTQD) has biased composition (basic and acidic residues). Acidic residues predominate over residues 361 to 386 (QEEEEEEKEEKEEKEEEEEKEEEEKR). Residues 387–406 (EEEKKKEKEEEKKEKEKEEK) are compositionally biased toward basic and acidic residues. 2 stretches are compositionally biased toward acidic residues: residues 407–451 (EEKE…EEEP) and 483–518 (LPEE…EEGE). A compositionally biased stretch (pro residues) spans 550–560 (TIPPPERPPVS). Residues 621-631 (ASQNSAIINDR) are calmodulin-binding CaM1. Residues 721 to 742 (ILWLFFVVLAWNWNCWLIPVRW) form a helical membrane-spanning segment. The Extracellular segment spans residues 743–751 (AFPYQRADN). A helical transmembrane segment spans residues 752-773 (IHLWLLMDYLCDFIYLLDITVF). Over 774-788 (QMRLQFVKGGDIITD) the chain is Cytoplasmic. A helical transmembrane segment spans residues 789 to 808 (KKEMRNNYLKSQRFKMDLLC). Over 809-824 (LLPLDFLYLKLGVNPL) the chain is Extracellular. Residues 825 to 837 (LRLPRCLKYMAFF) form a helical membrane-spanning segment. At 838-849 (EFNNRLEAILSK) the chain is on the cytoplasmic side. Residues 850 to 872 (AYVYRVIRTTAYLLYSLHLNSCL) traverse the membrane as a helical segment. An ion conduction pathway region spans residues 850–949 (AYVYRVIRTT…IGQMRDVVGA (100 aa)). The Extracellular portion of the chain corresponds to 873-895 (YYWASAFQGIGSTHWVYDGVGNS). Helical transmembrane passes span 896–922 (YIRC…LFEI) and 923–948 (VFQL…DVVG). The Cytoplasmic portion of the chain corresponds to 949–1307 (AATAGQTYYR…MLEEKKEEVE (359 aa)). Residues 952–1028 (AGQTYYRSCM…NIVSKVALFQ (77 aa)) are C-linker. The tract at residues 1026 to 1130 (LFQGCDRQMI…LDKKDLNEIL (105 aa)) is cNMP-binding domain. Positions 1032 to 1148 (RQMIFDMLKR…LLRKKARRML (117 aa)) are cyclic nucleotide-binding domain. The 3',5'-cyclic GMP site is built by Gly-1093, Glu-1094, Ser-1096, Arg-1106, and Thr-1107. Position 1106 (Arg-1106) interacts with 3',5'-cyclic AMP. The interval 1212-1218 (QQQLLEQ) is calmodulin-binding CaM2. A compositionally biased stretch (low complexity) spans 1214 to 1238 (QLLEQAKSSQEAGGEEGSGATDQPA). The tract at residues 1214-1307 (QLLEQAKSSQ…MLEEKKEEVE (94 aa)) is disordered. The span at 1250 to 1261 (EPPAPSSPPPAS) shows a compositional bias: pro residues.

It belongs to the cyclic nucleotide-gated cation channel (TC 1.A.1.5) family. CNGB1 subfamily. The rod cyclic nucleotide-gated channel is a heterotetramer composed of CNGA1 and CNGB1 subunits with 3:1 stoichiometry. CNGA1:CNGB1 channel binds Ca(2+)-bound CALM1 via CaM1 and CaM2 regions of the CNGB1 subunit; this interaction modulates the affinity of the channel for cNMPs in response to intracellular Ca(2+) levels. In terms of assembly, the olfactory cyclic nucleotide-gated channel is a heterotetramer composed of CNGA2, CNGA4 and CNGB1b subunits with 2:1:1 stoichiometry. In terms of tissue distribution, expressed in olfactory sensory cilia (at protein level).

The protein resides in the cell projection. Its subcellular location is the cilium membrane. It catalyses the reaction Ca(2+)(in) = Ca(2+)(out). The enzyme catalyses Na(+)(in) = Na(+)(out). It carries out the reaction K(+)(in) = K(+)(out). The catalysed reaction is NH4(+)(in) = NH4(+)(out). It catalyses the reaction Rb(+)(in) = Rb(+)(out). The enzyme catalyses Li(+)(in) = Li(+)(out). It carries out the reaction Cs(+)(in) = Cs(+)(out). Its function is as follows. Pore-forming subunit of the rod cyclic nucleotide-gated channel. Mediates rod photoresponses at dim light converting transient changes in intracellular cGMP levels into electrical signals. In the dark, cGMP levels are high and keep the channel open enabling a steady inward current carried by Na(+) and Ca(2+) ions that leads to membrane depolarization and neurotransmitter release from synaptic terminals. Upon photon absorption cGMP levels decline leading to channel closure and membrane hyperpolarization that ultimately slows neurotransmitter release and signals the presence of light, the end point of the phototransduction cascade. Conducts cGMP- and cAMP-gated ion currents, with permeability for monovalent and divalent cations. The selectivity for Ca(2+) over Na(+) increases with cGMP concentrations, whereas the selectivity among monovalent ions is independent of the cGMP levels. Functionally, pore-forming subunit of the olfactory cyclic nucleotide-gated channel. Operates in the cilia of olfactory sensory neurons where chemical stimulation of the odorant is converted to an electrical signal. Mediates odorant-induced cAMP-dependent Ca(2+) influx triggering neuron depolarization. The rise of intracellular Ca(2+) levels potentiates the olfactory response by activating Ca(2+)-dependent Cl(-) channels, but it also serves as a negative feedback signal to desensitize the channel for rapid adaptation to odorants. The sequence is that of Cyclic nucleotide-gated channel beta-1 from Rattus norvegicus (Rat).